The following is a 64-amino-acid chain: Putative neurotoxin-H (64 aa).

The first 19 residues, 1 to 19 (MYATVTVTVLLLISSGIFC), serve as a signal peptide directing secretion. 3 disulfides stabilise this stretch: C25-C45, C32-C54, and C36-C56.

In terms of tissue distribution, expressed by the venom gland.

The protein resides in the secreted. The sequence is that of Putative neurotoxin-H from Lychas mucronatus (Chinese swimming scorpion).